We begin with the raw amino-acid sequence, 80 residues long: Dermaseptin-DA3 (80 aa).

A signal peptide spans M1–C22. A propeptide spanning residues E23 to E42 is cleaved from the precursor. Positions E24–S48 are disordered. The span at E29–S40 shows a compositional bias: acidic residues. L77 carries the post-translational modification Leucine amide. Residues E79–Q80 constitute a propeptide that is removed on maturation.

The protein belongs to the frog skin active peptide (FSAP) family. Dermaseptin subfamily. As to expression, expressed by the skin glands.

It localises to the secreted. In terms of biological role, possesses a potent antimicrobial activity against Gram-positive and Gram-negative bacteria. Probably acts by disturbing membrane functions with its amphipathic structure. This chain is Dermaseptin-DA3, found in Agalychnis dacnicolor (Giant Mexican leaf frog).